The following is a 309-amino-acid chain: MNRLQVELPGLSLKNPIIPASGCFGFGREYAQFYDLSVLGSIMIKATTEQPRYGNPTPRVAETPGGMLNAIGLQNPGLEKVMNSELPWLEQFDLPIIANVAGSQAEDYVAVAKEISKAPNVHALELNISCPNVKTGGIAFGTNPEIAADLTKRVKEVSEVPVYVKLSPNVANIVEIAKAIANAGADGLTMINTLLGMRLDLKTAKPILANRTGGLSGPAIKPVAIRMVHEVSQAVNIPIIGMGGIETAEDVIEFFYAGASAVAVGTANFIDPFVCPTIIEELPALLDELGFDHISECQGRSWKQTCHSR.

Residues serine 21 and lysine 45–alanine 46 contribute to the FMN site. Substrate is bound by residues lysine 45 and asparagine 69–leucine 73. Residues asparagine 99 and asparagine 127 each contribute to the FMN site. Asparagine 127 contacts substrate. Cysteine 130 serves as the catalytic Nucleophile. Residues lysine 165 and isoleucine 191 each contribute to the FMN site. Residue asparagine 192–threonine 193 participates in substrate binding. FMN is bound by residues glycine 217, glycine 243–glycine 244, and glycine 265–threonine 266.

This sequence belongs to the dihydroorotate dehydrogenase family. Type 1 subfamily. As to quaternary structure, heterotetramer of 2 PyrK and 2 PyrD type B subunits. FMN serves as cofactor.

Its subcellular location is the cytoplasm. It carries out the reaction (S)-dihydroorotate + NAD(+) = orotate + NADH + H(+). The protein operates within pyrimidine metabolism; UMP biosynthesis via de novo pathway; orotate from (S)-dihydroorotate (NAD(+) route): step 1/1. Functionally, catalyzes the conversion of dihydroorotate to orotate with NAD(+) as electron acceptor. This is Dihydroorotate dehydrogenase B (NAD(+)), catalytic subunit (pyrD) from Bacillus thuringiensis (strain Al Hakam).